A 281-amino-acid chain; its full sequence is Protein ZAR1-like 1.S (281 aa).

The segment at 183–267 adopts a 3CxxC-type zinc-finger fold; the sequence is QKYGFFQCKD…QDLCGRCKGQ (85 aa).

This sequence belongs to the ZAR1 family. As to quaternary structure, component of a cytoplasmic ribonucleoprotein complex together with eif4enif1/4E-T and cpeb1. Expressed in oocytes.

The protein localises to the cytoplasm. Its subcellular location is the cytoplasmic ribonucleoprotein granule. MRNA-binding protein required for maternal mRNA storage, translation and degradation during oocyte maturation. Controls timing of meiosis during oogenesis. Probably promotes formation of some phase-separated membraneless compartment that stores maternal mRNAs in oocytes: acts by undergoing liquid-liquid phase separation upon binding to maternal mRNAs. Binds to the 3'-UTR of maternal mRNAs, inhibiting their translation. The polypeptide is Protein ZAR1-like 1.S (Xenopus laevis (African clawed frog)).